The sequence spans 416 residues: Iron/alpha-ketoglutarate-dependent dioxygenase asqJ (416 aa).

Residues 1–53 (MGYPKAFTSSDSEPEPDLSRDLGNPVMGNPGVVSRSSSTVAQHSVRNNPTGPD) are disordered. Positions 34–50 (SRSSSTVAQHSVRNNPT) are enriched in polar residues. Fe cation-binding residues include histidine 242, aspartate 244, and histidine 319.

The protein belongs to the PhyH family. As to quaternary structure, homodimer. Fe cation serves as cofactor.

The enzyme catalyses (-)-4'-methoxycyclopeptine + 2-oxoglutarate + O2 = (Z)-4'-methoxydehydrocyclopeptine + succinate + CO2 + H2O. It carries out the reaction (Z)-4'-methoxydehydrocyclopeptine + 2-oxoglutarate + O2 = (-)-4'-methoxycyclopenine + succinate + CO2. The catalysed reaction is (-)-cyclopeptine + 2-oxoglutarate + O2 = (Z)-dehydrocyclopeptine + succinate + CO2 + H2O. It catalyses the reaction (Z)-dehydrocyclopeptine + 2-oxoglutarate + O2 = (-)-cyclopenine + succinate + CO2. Its pathway is secondary metabolite biosynthesis. The protein operates within alkaloid biosynthesis. It functions in the pathway mycotoxin biosynthesis. Its function is as follows. Iron/alpha-ketoglutarate-dependent dioxygenase; part of the gene cluster that mediates the biosynthesis of the aspoquinolone mycotoxins. Within the pathway, the iron/alpha-ketoglutarate-dependent dioxygenase asqJ acts as a (-)-cyclopenine synthase that converts 4'-methoxycyclopeptin into 4'-methoxydehydrocyclopeptin through dehydrogenation to form a double bond between C-alpha and C-beta of the O-methyltyrosine side chain. AsqJ is a very unique dioxygenase which is capable of catalyzing radical-mediated dehydrogenation and epoxidation reactions sequentially on a 6,7-benzo-diazepinedione substrate in the 4'-methoxyviridicatin biosynthetic pathway. AsqJ is also capable of converting cyclopeptin into dehydrocyclopeptin. The first step of the pathway is catalyzed by the nonribosomal peptide synthetase asqK that condenses anthranilic acid and O-methyl-L-tyrosine to produce 4'-methoxycyclopeptin. 4'-methoxycyclopeptin is then converted to 4'-methoxydehydrocyclopeptin by the ketoglutarate-dependent dioxygenase asqJ. AsqJ also converts its first product 4'-methoxydehydrocyclopeptin to 4'-methoxycyclopenin. The following conversion of 4'-methoxycyclopenin into 4'-methoxyviridicatin is catalyzed by the cyclopenase asqI. 4'-methoxyviridicatin is the precursor of quinolone natural products, and is further converted to quinolinone B. The prenyltransferase asqH1 then catalyzes the canonical Friedel-Crafts alkylation of quinolinone B with dimethylallyl cation to yield dimethylallyl quinolone, which is subjected to FAD-dependent dehydrogenation by the FAD-linked oxidoreductase asqF to yield conjugated aryl diene. The delta(3') double bond then serves as the site of the second alkylation with DMAPP catalyzed by the prenyltransferase asqH2 to yield a carbenium ion intermediate, which can be attacked by H(2)O to yield a styrenyl quinolone containing a C3'-hydroxyprenyl chain. The FAD-dependent monooxygenase asqG performs epoxidation of the terminal C7'-C8' olefin. Finally, after dehydratation of the epoxide at C3 by asqC, the quinolone epoxide rearrangement protein asqO catalyzes an enzymatic 3-exo-tet cyclization to yield the cyclopropyl-THF ring system in aspoquinolone. The polypeptide is Iron/alpha-ketoglutarate-dependent dioxygenase asqJ (Emericella nidulans (strain FGSC A4 / ATCC 38163 / CBS 112.46 / NRRL 194 / M139) (Aspergillus nidulans)).